The following is a 77-amino-acid chain: Probable Fe(2+)-trafficking protein (77 aa).

Belongs to the Fe(2+)-trafficking protein family.

Functionally, could be a mediator in iron transactions between iron acquisition and iron-requiring processes, such as synthesis and/or repair of Fe-S clusters in biosynthetic enzymes. The polypeptide is Probable Fe(2+)-trafficking protein (Baumannia cicadellinicola subsp. Homalodisca coagulata).